A 188-amino-acid polypeptide reads, in one-letter code: Gamma-glutamylcyclotransferase (188 aa).

Position 19 to 22 (19 to 22 (YFAY)) interacts with substrate. Glutamate 98 functions as the Proton acceptor in the catalytic mechanism. Serine 173 is subject to Phosphoserine.

This sequence belongs to the gamma-glutamylcyclotransferase family. In terms of assembly, homodimer.

The catalysed reaction is an alpha-(gamma-L-glutamyl)-L-amino acid = 5-oxo-L-proline + an L-alpha-amino acid. Its function is as follows. Catalyzes the formation of 5-oxoproline from gamma-glutamyl dipeptides and may play a significant role in glutathione homeostasis. Induces release of cytochrome c from mitochondria with resultant induction of apoptosis. The chain is Gamma-glutamylcyclotransferase (GGCT) from Bos taurus (Bovine).